We begin with the raw amino-acid sequence, 258 residues long: Phosphate import ATP-binding protein PstB (258 aa).

An ABC transporter domain is found at 5–253 (LDLNDVNIYY…PTKKETEDYI (249 aa)). Residue 37–44 (GPSGCGKS) participates in ATP binding.

The protein belongs to the ABC transporter superfamily. Phosphate importer (TC 3.A.1.7) family. As to quaternary structure, the complex is composed of two ATP-binding proteins (PstB), two transmembrane proteins (PstC and PstA) and a solute-binding protein (PstS).

The protein resides in the cell membrane. The catalysed reaction is phosphate(out) + ATP + H2O = ADP + 2 phosphate(in) + H(+). Functionally, part of the ABC transporter complex PstSACB involved in phosphate import. Responsible for energy coupling to the transport system. This Corynebacterium jeikeium (strain K411) protein is Phosphate import ATP-binding protein PstB.